The sequence spans 735 residues: MHCGLLEEPDMDSTESWIERCLNESESKRFSSHSSIGNISNDENEEKENNRASKPHSTPATLQWLEENYEIAEGVCIPRSALYMHYLDFCEKLDSQPVNAASFGKIIRQQFPQLTTRRLGTRGQSKYHYYGIAVKESSQYYDVMYSKKGAAWVNETGKKEVTKQTVAYSPRSKLGTLLPDFPNVKDLNLPASLPEEKVSTFIMMYRTHCQRILDTVIRANFDEVQSFLLHFWQGMPPHMLPVLGSSTVVNIVGVCDSILYKAISGVLMPTVLQALPDSLTQVIRKFAKQLDEWLKVALHDLPENLRNIKFELSRRFSQILKRQTSLNHLCQASRTVIHSADITFQMLEDWRNVDLNSITKQTLYTMEDSREDQRRLIIQLYQEFDRLLEDQSPIEAYIEWLDSMVERCVVRVAGKRPGSLKRVAQQFLLMWSCFGTRVIRDMTLHSAPSFGSFHLIHLMFDDYVLYLLESLHCQERANELMRAMKGEGAPADTGEELMLMSSTPTSTSPAPYSPAKSVHSVGVPAVGSPNSAQSPEYTSISATTGAVQSYTWSLTYTVTTSGGSPTEPGSQLSCMRGGPALHGSSSAHRMPVYPHRDEHGYTGSYNYSSYANQHHHAIQSQYSSLTHEAGLPTPLHYSSYHRTSAQYPLNSQMSRMESCLMSGSPLLHSSPVTPRWPDVPSANSCYSSPTVHASRYSTGDMYSPLAPRRNSEYEHAQHFPGFAYINGEATTGWAK.

Positions 25 to 59 (SESKRFSSHSSIGNISNDENEEKENNRASKPHSTP) are disordered. The DNA-binding element occupies 44–126 (NEEKENNRAS…RRLGTRGQSK (83 aa)). The RFX-type winged-helix DNA-binding region spans 61–136 (TLQWLEENYE…YHYYGIAVKE (76 aa)). Positions 315–487 (RFSQILKRQT…NELMRAMKGE (173 aa)) are necessary for dimerization.

This sequence belongs to the RFX family.

The protein localises to the nucleus. In terms of biological role, may activate transcription by interacting directly with the X-box. This Danio rerio (Zebrafish) protein is Transcription factor RFX4 (rfx4).